Here is a 235-residue protein sequence, read N- to C-terminus: Probable ribosomal RNA small subunit methyltransferase A (235 aa).

Residues His9, Leu11, Gly34, Glu55, Asp78, and Asn93 each contribute to the S-adenosyl-L-methionine site.

Belongs to the class I-like SAM-binding methyltransferase superfamily. rRNA adenine N(6)-methyltransferase family. RsmA subfamily.

Its subcellular location is the cytoplasm. Specifically dimethylates two adjacent adenosines in the loop of a conserved hairpin near the 3'-end of 16S rRNA in the 30S particle. May play a critical role in biogenesis of 30S subunits. The sequence is that of Probable ribosomal RNA small subunit methyltransferase A from Pyrobaculum islandicum (strain DSM 4184 / JCM 9189 / GEO3).